A 337-amino-acid polypeptide reads, in one-letter code: Adenylosuccinate synthetase (337 aa).

Residues 12–18 and 42–44 each bind GTP; these read GDEGKGK and GHT. Catalysis depends on aspartate 13, which acts as the Proton acceptor. Mg(2+)-binding residues include aspartate 13 and glycine 42. Residues 13-16, 40-43, threonine 127, arginine 141, glutamine 179, threonine 194, and arginine 256 contribute to the IMP site; these read DEGK and NAGH. Histidine 43 serves as the catalytic Proton donor. 252–258 is a binding site for substrate; sequence TVTGRRR. Residues arginine 258, 284-286, and 324-326 each bind GTP; these read CLD and STG.

It belongs to the adenylosuccinate synthetase family. Homodimer. Mg(2+) is required as a cofactor.

The protein resides in the cytoplasm. It catalyses the reaction IMP + L-aspartate + GTP = N(6)-(1,2-dicarboxyethyl)-AMP + GDP + phosphate + 2 H(+). It functions in the pathway purine metabolism; AMP biosynthesis via de novo pathway; AMP from IMP: step 1/2. Plays an important role in the de novo pathway of purine nucleotide biosynthesis. Catalyzes the first committed step in the biosynthesis of AMP from IMP. This Methanococcus maripaludis (strain C5 / ATCC BAA-1333) protein is Adenylosuccinate synthetase.